We begin with the raw amino-acid sequence, 203 residues long: uncharacterized protein (203 aa).

The segment at 1 to 23 is disordered; it reads MGSSFVIDRSSSSPAPPRGPAPK.

This is an uncharacterized protein from Saccharomyces cerevisiae (strain ATCC 204508 / S288c) (Baker's yeast).